The sequence spans 203 residues: Probable Tat proofreading chaperone DmsD (203 aa).

It belongs to the TorD/DmsD family. DmsD subfamily.

Required for biogenesis/assembly of DMSO reductase, but not for the interaction of the DmsA signal peptide with the Tat system. May be part of a chaperone cascade complex that facilitates a folding-maturation pathway for the substrate protein. The polypeptide is Probable Tat proofreading chaperone DmsD (Haemophilus influenzae (strain ATCC 51907 / DSM 11121 / KW20 / Rd)).